A 230-amino-acid chain; its full sequence is Aminodeoxyfutalosine nucleosidase (230 aa).

Glutamate 13 acts as the Proton acceptor in catalysis. Substrate-binding positions include glycine 80, valine 154, and 174-175 (ME). The Proton donor role is filled by aspartate 198.

The protein belongs to the PNP/UDP phosphorylase family. MtnN subfamily. As to quaternary structure, homodimer.

The enzyme catalyses 6-amino-6-deoxyfutalosine + H2O = dehypoxanthine futalosine + adenine. It catalyses the reaction S-adenosyl-L-homocysteine + H2O = S-(5-deoxy-D-ribos-5-yl)-L-homocysteine + adenine. It carries out the reaction S-methyl-5'-thioadenosine + H2O = 5-(methylsulfanyl)-D-ribose + adenine. The catalysed reaction is 5'-deoxyadenosine + H2O = 5-deoxy-D-ribose + adenine. Its pathway is quinol/quinone metabolism; menaquinone biosynthesis. It participates in amino-acid biosynthesis; L-methionine biosynthesis via salvage pathway; S-methyl-5-thio-alpha-D-ribose 1-phosphate from S-methyl-5'-thioadenosine (hydrolase route): step 1/2. Is inhibited by the transition state analog BuT-DADMe-ImmA. This compound is also able to inhibit H.pylori growth and is more efficient than antibiotics commonly used in ulcer therapy. Its function is as follows. Catalyzes the direct conversion of aminodeoxyfutalosine (AFL) into dehypoxanthine futalosine (DHFL) and adenine via the hydrolysis of the N-glycosidic bond; this reaction seems to represent an essential step in the menaquinone biosynthesis pathway in Helicobacter species. Also catalyzes the hydrolysis of 5'-methylthioadenosine (MTA) to adenine and 5'-methylthioribose. Can also probably use S-adenosylhomocysteine (SAH) as substrate, leading to adenine and S-ribosylhomocysteine. These other activities highlight the tremendous versatility of the enzyme, which also plays key roles in S-adenosylmethionine recycling and in the biosynthesis of the quorum-sensing molecule autoinducer-2. This Helicobacter pylori (strain J99 / ATCC 700824) (Campylobacter pylori J99) protein is Aminodeoxyfutalosine nucleosidase (mtnN).